The sequence spans 674 residues: Polyunsaturated fatty acid 5-lipoxygenase (674 aa).

One can recognise a PLAT domain in the interval 2–118 (PSYTVTVATG…EVVLRDGRAK (117 aa)). Ca(2+) is bound by residues G17, T18, D19, N44, D45, E47, D79, and D80. The region spanning 119–674 (LARDDQIHIL…PDRIPNSVAI (556 aa)) is the Lipoxygenase domain. Residue S272 is modified to Phosphoserine; by MAPKAPK2. Fe cation-binding residues include H368 and H373. Phosphoserine; by PKA is present on S524. Fe cation contacts are provided by H551, N555, and I674.

It belongs to the lipoxygenase family. Homodimer. Interacts with ALOX5AP and LTC4S. Interacts with COTL1, the interaction is required for stability and efficient catalytic activity. Interacts with PIK3R1; this interaction bridges ALOX5 with CD40 after CD40 ligation in B cells and leads to the production of reactive oxygen species (ROS). Interacts (via PLAT domain) with DICER1 (via Dicer dsRNA-binding fold domain); this interaction enhances arachidonate 5-lipoxygenase activity and modifies the miRNA precursor processing activity of DICER1. It depends on Fe cation as a cofactor. Serine phosphorylation by MAPKAPK2 is stimulated by arachidonic acid. Phosphorylation on Ser-524 by PKA has an inhibitory effect. Phosphorylation on Ser-272 prevents export from the nucleus. Phosphorylation at Ser-524 is stimulated by 8-bromo-3',5'-cyclic AMP or prostaglandin E2.

The protein localises to the cytoplasm. The protein resides in the nucleus matrix. Its subcellular location is the nucleus membrane. It localises to the perinuclear region. It is found in the cytosol. The protein localises to the nucleus envelope. The protein resides in the nucleus intermembrane space. The enzyme catalyses (5Z,8Z,11Z,14Z)-eicosatetraenoate + O2 = leukotriene A4 + H2O. It carries out the reaction 18-HEPE + O2 = (5S)-hydroperoxy-18-hydroxy-(7E,9E,11Z,14Z,16E)-eicosapentaenoate. It catalyses the reaction (18R)-hydroxy-(5Z,8Z,11Z,14Z,16E)-eicosapentaenoate + O2 = (5S)-hydroperoxy-(18R)-hydroxy-(6E,8Z,11Z,14Z,16E)-eicosapentaenoate. The catalysed reaction is (18S)-hydroxy-(5Z,8Z,11Z,14Z,16E)-eicosapentaenoate + O2 = (5S)-hydroperoxy-(18S)-hydroxy-(6E,8Z,11Z,14Z,16E)-eicosapentaenoate. The enzyme catalyses (5S)-hydroperoxy-(18S)-hydroxy-(6E,8Z,11Z,14Z,16E)-eicosapentaenoate = (5S,6S)-epoxy-(18S)-hydroxy-(7E,9E,11Z,14Z,16E)-eicosapentaenoate + H2O. It carries out the reaction (5S)-hydroperoxy-(18R)-hydroxy-(6E,8Z,11Z,14Z,16E)-eicosapentaenoate = (5S,6S)-epoxy-(18R)-hydroxy-(7E,9E,11Z,14Z,16E)-eicosapentaenoate + H2O. It catalyses the reaction (5S)-hydroperoxy-18-hydroxy-(7E,9E,11Z,14Z,16E)-eicosapentaenoate = (5S,6S)-epoxy-18-hydroxy-(7E,9E,11Z,14Z,16E)-eicosapentaenoate + H2O. The catalysed reaction is (5Z,8Z,11Z,14Z)-eicosatetraenoate + O2 = (5S)-hydroperoxy-(6E,8Z,11Z,14Z)-eicosatetraenoate. The enzyme catalyses (15S)-hydroxy-(5Z,8Z,11Z,13E)-eicosatetraenoate + O2 = (5S)-hydroperoxy-(15S)-hydroxy-(6E,8Z,11Z,13E)-eicosatetraenoate. It carries out the reaction (5S)-hydroperoxy-(6E,8Z,11Z,14Z)-eicosatetraenoate = leukotriene A4 + H2O. It catalyses the reaction (5Z,8Z,11Z,14Z)-eicosatetraenoate + O2 = (8S)-hydroperoxy-(5Z,9E,11Z,14Z)-eicosatetraenoate. The catalysed reaction is (5Z,8Z,11Z,14Z)-eicosatetraenoate + O2 = (12S)-hydroperoxy-(5Z,8Z,10E,14Z)-eicosatetraenoate. The enzyme catalyses (5Z,8Z)-eicosadienoate + O2 = (5S)-hydroperoxy-(6E,8Z)-eicosadienoate. It carries out the reaction (12S)-hydroxy-(5Z,8Z,10E,14Z)-eicosatetraenoate + O2 = (5S)-hydroperoxy-(12S)-hydroxy-(6E,8Z,10E,14Z)-eicosatetraenoate. It catalyses the reaction (5Z,8Z,11Z,14Z,17Z)-eicosapentaenoate + O2 = 5-hydroperoxy-(6E,8Z,11Z,14Z,17Z)-eicosapentaenoate. The catalysed reaction is (4Z,7Z,10Z,13Z,16Z,19Z)-docosahexaenoate + O2 = (14S)-hydroperoxy-(4Z,7Z,10Z,12E,16Z,19Z)-docosahexaenoate. The enzyme catalyses (4Z,7Z,10Z,13Z,16Z,19Z)-docosahexaenoate + O2 = (7S)-hydroperoxy-(4Z,8E,10Z,13Z,16Z,19Z)-docosahexaenoate. It carries out the reaction (4Z,7Z,10Z,13Z,16Z,19Z)-docosahexaenoate + O2 = (17S)-hydroperoxy-(4Z,7Z,10Z,13Z,15E,19Z)-docosahexaenoate. Its pathway is lipid metabolism; leukotriene A4 biosynthesis. Its activity is regulated as follows. Undergoes a sequential loss of the oxygenase and pseudoperoxidase activities which is dependent on the structural characteristics of the substrate for the reaction, on oxygen concentration and on exposure to phospholipids and calcium. 15-HETE and other 15-mono-hydroxyeicosanoids exhibit the highest inhibitory potencies in their capability of suppressing 5-lipoxygenation of arachidonic acid, whereas the other HETEs, (5S,15S)-dihydroxy-(6E,8Z,11Z,13E)-eicosatetraenoic acid (5,15-diHETE) as well as octadecanoids, are modest or poor inhibitors. The formation of (5S)-hydroperoxy-(15S)-hydroxy-(6E,8Z,11Z,13E)-eicosatetraenoate is strongly stimulated by either hydroperoxypolyenoic fatty acids or arachidonic acid. Arachidonate 5-lipoxygenase and leukotriene A4 synthase activities are allosterically increased by ATP. Catalyzes the oxygenation of arachidonate ((5Z,8Z,11Z,14Z)-eicosatetraenoate) to 5-hydroperoxyeicosatetraenoate (5-HPETE) followed by the dehydration to 5,6- epoxyeicosatetraenoate (Leukotriene A4/LTA4), the first two steps in the biosynthesis of leukotrienes, which are potent mediators of inflammation. Also catalyzes the oxygenation of arachidonate into 8-hydroperoxyicosatetraenoate (8-HPETE) and 12-hydroperoxyicosatetraenoate (12-HPETE). Displays lipoxin synthase activity being able to convert (15S)-HETE into a conjugate tetraene. Although arachidonate is the preferred substrate, this enzyme can also metabolize oxidized fatty acids derived from arachidonate such as (15S)-HETE, eicosapentaenoate (EPA) such as (18R)- and (18S)-HEPE or docosahexaenoate (DHA) which lead to the formation of specialized pro-resolving mediators (SPM) lipoxin and resolvins E and D respectively, therefore it participates in anti-inflammatory responses. Oxidation of DHA directly inhibits endothelial cell proliferation and sprouting angiogenesis via peroxisome proliferator-activated receptor gamma (PPARgamma). It does not catalyze the oxygenation of linoleic acid and does not convert (5S)-HETE to lipoxin isomers. In addition to inflammatory processes, it participates in dendritic cell migration, wound healing through an antioxidant mechanism based on heme oxygenase-1 (HO-1) regulation expression, monocyte adhesion to the endothelium via ITGAM expression on monocytes. Moreover, it helps establish an adaptive humoral immunity by regulating primary resting B cells and follicular helper T cells and participates in the CD40-induced production of reactive oxygen species (ROS) after CD40 ligation in B cells through interaction with PIK3R1 that bridges ALOX5 with CD40. May also play a role in glucose homeostasis, regulation of insulin secretion and palmitic acid-induced insulin resistance via AMPK. Can regulate bone mineralization and fat cell differentiation increases in induced pluripotent stem cells. This is Polyunsaturated fatty acid 5-lipoxygenase from Homo sapiens (Human).